We begin with the raw amino-acid sequence, 429 residues long: Histidinol dehydrogenase (429 aa).

The NAD(+) site is built by Tyr-130, Gln-191, and Asn-214. Substrate contacts are provided by Ser-237, Gln-259, and His-262. Zn(2+) is bound by residues Gln-259 and His-262. Catalysis depends on proton acceptor residues Glu-327 and His-328. 4 residues coordinate substrate: His-328, Asp-361, Glu-415, and His-420. Asp-361 serves as a coordination point for Zn(2+). His-420 serves as a coordination point for Zn(2+).

It belongs to the histidinol dehydrogenase family. It depends on Zn(2+) as a cofactor.

The catalysed reaction is L-histidinol + 2 NAD(+) + H2O = L-histidine + 2 NADH + 3 H(+). It functions in the pathway amino-acid biosynthesis; L-histidine biosynthesis; L-histidine from 5-phospho-alpha-D-ribose 1-diphosphate: step 9/9. In terms of biological role, catalyzes the sequential NAD-dependent oxidations of L-histidinol to L-histidinaldehyde and then to L-histidine. The chain is Histidinol dehydrogenase from Nitrobacter winogradskyi (strain ATCC 25391 / DSM 10237 / CIP 104748 / NCIMB 11846 / Nb-255).